The primary structure comprises 343 residues: Anthranilate phosphoribosyltransferase (343 aa).

5-phospho-alpha-D-ribose 1-diphosphate is bound by residues Gly-78, 81–82, Thr-86, 88–91, 106–114, and Ser-118; these read GD, NIST, and KHGNRSVSS. An anthranilate-binding site is contributed by Gly-78. Ser-90 lines the Mg(2+) pocket. An anthranilate-binding site is contributed by Asn-109. Arg-164 is a binding site for anthranilate. The Mg(2+) site is built by Asp-223 and Glu-224.

The protein belongs to the anthranilate phosphoribosyltransferase family. Homodimer. It depends on Mg(2+) as a cofactor.

It carries out the reaction N-(5-phospho-beta-D-ribosyl)anthranilate + diphosphate = 5-phospho-alpha-D-ribose 1-diphosphate + anthranilate. Its pathway is amino-acid biosynthesis; L-tryptophan biosynthesis; L-tryptophan from chorismate: step 2/5. Functionally, catalyzes the transfer of the phosphoribosyl group of 5-phosphorylribose-1-pyrophosphate (PRPP) to anthranilate to yield N-(5'-phosphoribosyl)-anthranilate (PRA). In Chlamydia felis (strain Fe/C-56) (Chlamydophila felis), this protein is Anthranilate phosphoribosyltransferase.